Here is a 379-residue protein sequence, read N- to C-terminus: tRNA-specific 2-thiouridylase MnmA (379 aa).

Residues 23–30 (AMSGGVDS) and leucine 49 contribute to the ATP site. Cysteine 117 functions as the Nucleophile in the catalytic mechanism. Cysteine 117 and cysteine 214 form a disulfide bridge. ATP is bound at residue glycine 141. Residues 163 to 165 (RDQ) form an interaction with tRNA region. Cysteine 214 (cysteine persulfide intermediate) is an active-site residue.

This sequence belongs to the MnmA/TRMU family.

The protein resides in the cytoplasm. It carries out the reaction S-sulfanyl-L-cysteinyl-[protein] + uridine(34) in tRNA + AH2 + ATP = 2-thiouridine(34) in tRNA + L-cysteinyl-[protein] + A + AMP + diphosphate + H(+). Functionally, catalyzes the 2-thiolation of uridine at the wobble position (U34) of tRNA, leading to the formation of s(2)U34. The polypeptide is tRNA-specific 2-thiouridylase MnmA (Cereibacter sphaeroides (strain KD131 / KCTC 12085) (Rhodobacter sphaeroides)).